The primary structure comprises 157 residues: MARTEYSNKLTGDNIARAKANELGCSPKHAVEIAHLVRNMMADDAVAYLEQVIDLKRAVPFHRFNRNVSHQKSLNGKTFGTAAGRYPVKAAAEYVRLIRSAQKNAEYAGLAPEKMVIIHAAANKGRCIKGIFPRAMGRATPKHKDSVNVEIILREVQ.

Belongs to the universal ribosomal protein uL22 family. In terms of assembly, part of the 50S ribosomal subunit.

Its function is as follows. This protein binds specifically to 23S rRNA. It makes multiple contacts with different domains of the 23S rRNA in the assembled 50S subunit and ribosome. The globular domain of the protein is located near the polypeptide exit tunnel on the outside of the subunit, while an extended beta-hairpin is found that lines the wall of the exit tunnel in the center of the 70S ribosome. The protein is Large ribosomal subunit protein uL22 of Methanocorpusculum labreanum (strain ATCC 43576 / DSM 4855 / Z).